A 615-amino-acid polypeptide reads, in one-letter code: Protein ENHANCED DISEASE RESISTANCE 4 (615 aa).

Disordered stretches follow at residues 46–271 (IAPS…DDDE), 292–336 (YKEQ…GRQG), and 549–592 (THDI…RGSP). Polar residues-rich tracts occupy residues 63–89 (NEPQSVPETNNVSSSSGQDTVLPSSPG) and 119–129 (GDGTNEIQEQE). The stretch at 104-129 (MESTEKELDDLELSNGDGTNEIQEQE) forms a coiled coil. Over residues 134-148 (DSEKNEREDNSRLES) the composition is skewed to basic and acidic residues. The segment covering 159–168 (GSGSSSGSLS) has biased composition (low complexity). Polar residues-rich tracts occupy residues 296 to 314 (GASSSSPFSENRRNGITTY) and 552 to 564 (INANRNSNSTSES). The segment covering 565–577 (PIDKAPSKPEKLR) has biased composition (basic and acidic residues).

In terms of assembly, interacts with RLK902. Binds and recruits EDR1 at the powdery mildew (e.g. G.cichoracearum) penetration site on the plasma membrane. Interacts with CHC2. In terms of tissue distribution, expressed in stems and rosette leaves, and weakly in inflorescences. Not detected in roots.

It is found in the cell membrane. The protein resides in the endosome. Functionally, plays a negative role in salicylic acid (SA)-mediated resistance to powdery mildew (e.g. Golovinomyces cichoracearum). May modulate plant immunity by regulating the relocation of EDR1 by interacting with CHC2 and modulating endocytosis. This chain is Protein ENHANCED DISEASE RESISTANCE 4, found in Arabidopsis thaliana (Mouse-ear cress).